The following is a 324-amino-acid chain: Phospho-N-acetylmuramoyl-pentapeptide-transferase (324 aa).

Transmembrane regions (helical) follow at residues 9–29 (TFAV…PFLV), 53–73 (TMGA…FSFI), 77–97 (VSAA…LGFL), 117–137 (FLGQ…NGFA), 147–167 (IEVD…VGFS), 176–196 (LDGL…VIAF), 201–221 (MDVA…LLFN), 227–247 (IFMG…ISIL), 253–273 (LLLL…LQVF), and 304–324 (VLTF…VVIF).

It belongs to the glycosyltransferase 4 family. MraY subfamily. The cofactor is Mg(2+).

The protein localises to the cell membrane. It catalyses the reaction UDP-N-acetyl-alpha-D-muramoyl-L-alanyl-gamma-D-glutamyl-meso-2,6-diaminopimeloyl-D-alanyl-D-alanine + di-trans,octa-cis-undecaprenyl phosphate = di-trans,octa-cis-undecaprenyl diphospho-N-acetyl-alpha-D-muramoyl-L-alanyl-D-glutamyl-meso-2,6-diaminopimeloyl-D-alanyl-D-alanine + UMP. Its pathway is cell wall biogenesis; peptidoglycan biosynthesis. In terms of biological role, catalyzes the initial step of the lipid cycle reactions in the biosynthesis of the cell wall peptidoglycan: transfers peptidoglycan precursor phospho-MurNAc-pentapeptide from UDP-MurNAc-pentapeptide onto the lipid carrier undecaprenyl phosphate, yielding undecaprenyl-pyrophosphoryl-MurNAc-pentapeptide, known as lipid I. The polypeptide is Phospho-N-acetylmuramoyl-pentapeptide-transferase (Listeria monocytogenes serotype 4b (strain CLIP80459)).